The following is a 195-amino-acid chain: Protein lin-28 homolog A (195 aa).

Residues 33 to 106 enclose the CSD domain; that stretch reads QGSGVCKWFN…GLESTRVTGP (74 aa). The segment at 98–126 is disordered; that stretch reads LESTRVTGPGGAPCIGSERRPKVKGQQKR. The segment at 107 to 130 is flexible linker; sequence GGAPCIGSERRPKVKGQQKRRQKG. CCHC-type zinc fingers lie at residues 131-148 and 153-170; these read DRCY…ECKL and KKCH…QCPA. Zn(2+)-binding residues include cysteine 133, cysteine 136, histidine 141, cysteine 146, cysteine 155, cysteine 158, histidine 163, and cysteine 168. Residues 175–195 are disordered; that stretch reads AANLEEQPISEEQELIPETME. Positions 182–195 are enriched in acidic residues; it reads PISEEQELIPETME.

It belongs to the lin-28 family. Monomer.

The protein resides in the cytoplasm. Its subcellular location is the rough endoplasmic reticulum. It is found in the P-body. The protein localises to the stress granule. It localises to the nucleus. The protein resides in the nucleolus. Functionally, RNA-binding protein that inhibits processing of pre-let-7 miRNAs and regulates translation of mRNAs that control developmental timing, pluripotency and metabolism. Seems to recognize a common structural G-quartet (G4) feature in its miRNA and mRNA targets. 'Translational enhancer' that drives specific mRNAs to polysomes and increases the efficiency of protein synthesis. Its association with the translational machinery and target mRNAs results in an increased number of initiation events per molecule of mRNA and, indirectly, in mRNA stabilization. Suppressor of microRNA (miRNA) biogenesis, including that of let-7. Binds specific target miRNA precursors (pre-miRNAs), recognizing an 5'-GGAG-3' motif found in their terminal loop, and recruits uridylyltransferase. This results in the terminal uridylation of target pre-miRNAs. Uridylated pre-miRNAs fail to be processed by Dicer and undergo degradation. Localized to the periendoplasmic reticulum area, binds to a large number of spliced mRNAs and inhibits the translation of mRNAs destined for the ER, reducing the synthesis of transmembrane proteins, ER or Golgi lumen proteins, and secretory proteins. Binds to and enhances the translation of mRNAs for several metabolic enzymes, increasing glycolysis and oxidative phosphorylation. Which, with the let-7 repression may enhance tissue repair in adult tissue. The polypeptide is Protein lin-28 homolog A (lin28a) (Xenopus tropicalis (Western clawed frog)).